Reading from the N-terminus, the 270-residue chain is Tryptophan synthase alpha chain (270 aa).

Active-site proton acceptor residues include Glu-49 and Asp-60.

It belongs to the TrpA family. In terms of assembly, tetramer of two alpha and two beta chains.

It carries out the reaction (1S,2R)-1-C-(indol-3-yl)glycerol 3-phosphate + L-serine = D-glyceraldehyde 3-phosphate + L-tryptophan + H2O. It participates in amino-acid biosynthesis; L-tryptophan biosynthesis; L-tryptophan from chorismate: step 5/5. The alpha subunit is responsible for the aldol cleavage of indoleglycerol phosphate to indole and glyceraldehyde 3-phosphate. The sequence is that of Tryptophan synthase alpha chain from Gluconobacter oxydans (strain 621H) (Gluconobacter suboxydans).